A 224-amino-acid chain; its full sequence is Imidazole glycerol phosphate synthase subunit HisH (224 aa).

Residues 5–214 (DTIIIDTGCA…MKMNAGSFAG (210 aa)) enclose the Glutamine amidotransferase type-1 domain. Cys80 (nucleophile) is an active-site residue. Catalysis depends on residues His189 and Glu191.

Heterodimer of HisH and HisF.

Its subcellular location is the cytoplasm. The enzyme catalyses 5-[(5-phospho-1-deoxy-D-ribulos-1-ylimino)methylamino]-1-(5-phospho-beta-D-ribosyl)imidazole-4-carboxamide + L-glutamine = D-erythro-1-(imidazol-4-yl)glycerol 3-phosphate + 5-amino-1-(5-phospho-beta-D-ribosyl)imidazole-4-carboxamide + L-glutamate + H(+). It carries out the reaction L-glutamine + H2O = L-glutamate + NH4(+). Its pathway is amino-acid biosynthesis; L-histidine biosynthesis; L-histidine from 5-phospho-alpha-D-ribose 1-diphosphate: step 5/9. Functionally, IGPS catalyzes the conversion of PRFAR and glutamine to IGP, AICAR and glutamate. The HisH subunit catalyzes the hydrolysis of glutamine to glutamate and ammonia as part of the synthesis of IGP and AICAR. The resulting ammonia molecule is channeled to the active site of HisF. This Shewanella loihica (strain ATCC BAA-1088 / PV-4) protein is Imidazole glycerol phosphate synthase subunit HisH.